Reading from the N-terminus, the 20-residue chain is Cytochrome c oxidase subunit 8B, mitochondrial (20 aa).

The segment at 1–20 is disordered; that stretch reads LSGKPAKXHLSVGEQAIAMT.

The protein belongs to the cytochrome c oxidase VIII family. Component of the cytochrome c oxidase (complex IV, CIV), a multisubunit enzyme composed of 14 subunits. The complex is composed of a catalytic core of 3 subunits MT-CO1, MT-CO2 and MT-CO3, encoded in the mitochondrial DNA, and 11 supernumerary subunits COX4I, COX5A, COX5B, COX6A, COX6B, COX6C, COX7A, COX7B, COX7C, COX8 and NDUFA4, which are encoded in the nuclear genome. The complex exists as a monomer or a dimer and forms supercomplexes (SCs) in the inner mitochondrial membrane with NADH-ubiquinone oxidoreductase (complex I, CI) and ubiquinol-cytochrome c oxidoreductase (cytochrome b-c1 complex, complex III, CIII), resulting in different assemblies (supercomplex SCI(1)III(2)IV(1) and megacomplex MCI(2)III(2)IV(2)).

The protein resides in the mitochondrion inner membrane. It participates in energy metabolism; oxidative phosphorylation. Its function is as follows. Component of the cytochrome c oxidase, the last enzyme in the mitochondrial electron transport chain which drives oxidative phosphorylation. The respiratory chain contains 3 multisubunit complexes succinate dehydrogenase (complex II, CII), ubiquinol-cytochrome c oxidoreductase (cytochrome b-c1 complex, complex III, CIII) and cytochrome c oxidase (complex IV, CIV), that cooperate to transfer electrons derived from NADH and succinate to molecular oxygen, creating an electrochemical gradient over the inner membrane that drives transmembrane transport and the ATP synthase. Cytochrome c oxidase is the component of the respiratory chain that catalyzes the reduction of oxygen to water. Electrons originating from reduced cytochrome c in the intermembrane space (IMS) are transferred via the dinuclear copper A center (CU(A)) of subunit 2 and heme A of subunit 1 to the active site in subunit 1, a binuclear center (BNC) formed by heme A3 and copper B (CU(B)). The BNC reduces molecular oxygen to 2 water molecules using 4 electrons from cytochrome c in the IMS and 4 protons from the mitochondrial matrix. In Oncorhynchus mykiss (Rainbow trout), this protein is Cytochrome c oxidase subunit 8B, mitochondrial.